The following is a 1097-amino-acid chain: DNA-directed RNA polymerase subunit beta (1097 aa).

The segment at 1072-1097 (QDINPRRNTPSRPTYESLGTSEYEED) is disordered. A compositionally biased stretch (polar residues) spans 1077–1091 (RRNTPSRPTYESLGT).

It belongs to the RNA polymerase beta chain family. As to quaternary structure, in cyanobacteria the RNAP catalytic core is composed of 2 alpha, 1 beta, 1 beta', 1 gamma and 1 omega subunit. When a sigma factor is associated with the core the holoenzyme is formed, which can initiate transcription.

The catalysed reaction is RNA(n) + a ribonucleoside 5'-triphosphate = RNA(n+1) + diphosphate. In terms of biological role, DNA-dependent RNA polymerase catalyzes the transcription of DNA into RNA using the four ribonucleoside triphosphates as substrates. The chain is DNA-directed RNA polymerase subunit beta from Prochlorococcus marinus (strain AS9601).